The sequence spans 438 residues: Transposon Ty2-B Gag polyprotein (438 aa).

Polar residues-rich tracts occupy residues 1–11 (MESQQLHQNPH), 19–39 (ASVTSKEVSSNQDPLAVSASN), and 49–60 (KVNSQQETTPGT). Disordered stretches follow at residues 1–88 (MESQ…YQQH), 364–397 (KNVSRTSPNTTNTKVTTRNYHRTNSSKPRAAKAH), and 419–438 (SSQYLSDDNELSLRPATERI). Residues 295–397 (ENNINVSDRL…SSKPRAAKAH (103 aa)) are RNA-binding. Positions 369–381 (TSPNTTNTKVTTR) are enriched in low complexity.

Homotrimer.

The protein resides in the cytoplasm. Its function is as follows. Capsid protein (CA) is the structural component of the virus-like particle (VLP), forming the shell that encapsulates the retrotransposons dimeric RNA genome. The particles are assembled from trimer-clustered units and there are holes in the capsid shells that allow for the diffusion of macromolecules. CA also has nucleocapsid-like chaperone activity, promoting primer tRNA(i)-Met annealing to the multipartite primer-binding site (PBS), dimerization of Ty2 RNA and initiation of reverse transcription. The sequence is that of Transposon Ty2-B Gag polyprotein (TY2A-B) from Saccharomyces cerevisiae (strain ATCC 204508 / S288c) (Baker's yeast).